Here is a 198-residue protein sequence, read N- to C-terminus: MSLIPVVVEQTNRGERSYDIYSRLLKDRIVFLGHPINDELSNLIIAQLLFLEAEDPDKDIHLYINSPGGSVTAALAMYDTIQYIKPDVATICMGQAASAGALLLASGTKGKRYALPNARVMIHQPAGGVQGKATEAEIHIKELLRLRERLNEILSKHTGKSVEQISKDVEQDYFMTAEEALEYGIIDEVITKNELKDK.

The Nucleophile role is filled by serine 98. The active site involves histidine 123.

The protein belongs to the peptidase S14 family. In terms of assembly, fourteen ClpP subunits assemble into 2 heptameric rings which stack back to back to give a disk-like structure with a central cavity, resembling the structure of eukaryotic proteasomes.

The protein resides in the cytoplasm. The enzyme catalyses Hydrolysis of proteins to small peptides in the presence of ATP and magnesium. alpha-casein is the usual test substrate. In the absence of ATP, only oligopeptides shorter than five residues are hydrolyzed (such as succinyl-Leu-Tyr-|-NHMec, and Leu-Tyr-Leu-|-Tyr-Trp, in which cleavage of the -Tyr-|-Leu- and -Tyr-|-Trp bonds also occurs).. In terms of biological role, cleaves peptides in various proteins in a process that requires ATP hydrolysis. Has a chymotrypsin-like activity. Plays a major role in the degradation of misfolded proteins. The chain is ATP-dependent Clp protease proteolytic subunit from Halothermothrix orenii (strain H 168 / OCM 544 / DSM 9562).